The following is a 393-amino-acid chain: Peptidyl-prolyl cis-trans isomerase CYP7 (393 aa).

In terms of domain architecture, PPIase cyclophilin-type spans 8-196 (YLDISIDKKP…SDVRISDCGV (189 aa)). 3 TPR repeats span residues 240-273 (ANII…INEY), 292-325 (MKIY…DNVP), and 330-363 (AKAY…NPDD).

Interacts with RPD3 and CNS1.

It catalyses the reaction [protein]-peptidylproline (omega=180) = [protein]-peptidylproline (omega=0). PPIases accelerate the folding of proteins. It catalyzes the cis-trans isomerization of proline imidic peptide bonds in oligopeptides. Plays a major role in negative regulation of the heat shock transcription factor (HSF). The protein is Peptidyl-prolyl cis-trans isomerase CYP7 (CPR7) of Saccharomyces cerevisiae (strain ATCC 204508 / S288c) (Baker's yeast).